The sequence spans 421 residues: BEN domain-containing protein 5 (421 aa).

N6-acetyllysine is present on Lys133. Residues 180–243 (RALYEELLRN…LNRRLQDVLL (64 aa)) are a coiled coil. A Glycyl lysine isopeptide (Lys-Gly) (interchain with G-Cter in SUMO2) cross-link involves residue Lys258. A BEN domain is found at 302-408 (GSGIWVDEEK…EKIMDINKSC (107 aa)).

In terms of biological role, acts as a transcriptional repressor. The protein is BEN domain-containing protein 5 (Bend5) of Mus musculus (Mouse).